The sequence spans 180 residues: Dynactin subunit 6 (180 aa).

The protein belongs to the dynactin subunits 5/6 family. Dynactin subunit 6 subfamily. Subunit of dynactin, a multiprotein complex part of a tripartite complex with dynein and a adapter, such as BICDL1, BICD2 or HOOK3. The dynactin complex is built around ACTR1A/ACTB filament and consists of an actin-related filament composed of a shoulder domain, a pointed end and a barbed end.

The protein localises to the cytoplasm. It is found in the cytoskeleton. In terms of biological role, part of the dynactin complex that activates the molecular motor dynein for ultra-processive transport along microtubules. In Caenorhabditis elegans, this protein is Dynactin subunit 6 (dnc-6).